The sequence spans 349 residues: Phenylalanine--tRNA ligase alpha subunit (349 aa).

Position 259 (E259) interacts with Mg(2+).

It belongs to the class-II aminoacyl-tRNA synthetase family. Phe-tRNA synthetase alpha subunit type 1 subfamily. As to quaternary structure, tetramer of two alpha and two beta subunits. The cofactor is Mg(2+).

Its subcellular location is the cytoplasm. The enzyme catalyses tRNA(Phe) + L-phenylalanine + ATP = L-phenylalanyl-tRNA(Phe) + AMP + diphosphate + H(+). This Lactobacillus helveticus (strain DPC 4571) protein is Phenylalanine--tRNA ligase alpha subunit.